The sequence spans 597 residues: Aspartate--tRNA ligase (597 aa).

Glutamate 173 lines the L-aspartate pocket. Residues 197-200 form an aspartate region; sequence QLFK. Residue arginine 219 participates in L-aspartate binding. Residues 219–221 and glutamine 228 contribute to the ATP site; that span reads RDE. Residue histidine 449 coordinates L-aspartate. Glutamate 483 contributes to the ATP binding site. Position 490 (arginine 490) interacts with L-aspartate. 535-538 is an ATP binding site; that stretch reads GLDR.

Belongs to the class-II aminoacyl-tRNA synthetase family. Type 1 subfamily. In terms of assembly, homodimer.

It localises to the cytoplasm. The enzyme catalyses tRNA(Asp) + L-aspartate + ATP = L-aspartyl-tRNA(Asp) + AMP + diphosphate. In terms of biological role, catalyzes the attachment of L-aspartate to tRNA(Asp) in a two-step reaction: L-aspartate is first activated by ATP to form Asp-AMP and then transferred to the acceptor end of tRNA(Asp). The protein is Aspartate--tRNA ligase of Shewanella pealeana (strain ATCC 700345 / ANG-SQ1).